The sequence spans 366 residues: S-adenosylmethionine:tRNA ribosyltransferase-isomerase (366 aa).

This sequence belongs to the QueA family. In terms of assembly, monomer.

It is found in the cytoplasm. It catalyses the reaction 7-aminomethyl-7-carbaguanosine(34) in tRNA + S-adenosyl-L-methionine = epoxyqueuosine(34) in tRNA + adenine + L-methionine + 2 H(+). It functions in the pathway tRNA modification; tRNA-queuosine biosynthesis. Its function is as follows. Transfers and isomerizes the ribose moiety from AdoMet to the 7-aminomethyl group of 7-deazaguanine (preQ1-tRNA) to give epoxyqueuosine (oQ-tRNA). The sequence is that of S-adenosylmethionine:tRNA ribosyltransferase-isomerase from Caulobacter vibrioides (strain ATCC 19089 / CIP 103742 / CB 15) (Caulobacter crescentus).